Here is a 186-residue protein sequence, read N- to C-terminus: uncharacterized protein (186 aa).

A run of 3 helical transmembrane segments spans residues 43–63, 69–89, and 143–163; these read GAWVIHIVLIAALRLIFHAIP, LAWTLTNLTYMAGSFIMFHWV, and WMFLVNIWALFMVLIPKLPAV.

It localises to the endoplasmic reticulum membrane. This is an uncharacterized protein from Schizosaccharomyces pombe (strain 972 / ATCC 24843) (Fission yeast).